The sequence spans 235 residues: TIR domain-containing adapter molecule 2 (235 aa).

A disordered region spans residues 1–39 (MGIGKSKINSCPLSLSWGKRHSVDTSPGYHESDSKKSED). The N-myristoyl glycine moiety is linked to residue Gly-2. Ser-16 is modified (phosphoserine; by PKC/PRKCE). Residues 30-39 (HESDSKKSED) are compositionally biased toward basic and acidic residues. The TIR domain occupies 73–229 (AEEEVFLKFV…TIWKETRNMV (157 aa)). The residue at position 167 (Tyr-167) is a Phosphotyrosine.

Homodimer. Interacts with TLR4, TICAM1, IRF3 and IRF7 in response to LPS. Interacts with IL1R1, IL1RAP, IRAK2, IRAK3 and TRAF6. Interacts with protein kinase-inactive mutants of IRAK1 and IRAK4. Isoform 1 interacts with isoform 2; the interaction occurs in late endosomes and disrupts the interaction between isoform 1 and TICAM1. Interacts with MYD88; the interaction decreases after IL-18 stimulation in a time-dependent manner. Interacts with IL18R1 and IL18RAP. Interacts with TLR2. Interacts with RAB11FIP2. In terms of processing, phosphorylated by PRKCE in response to LPS. Phosphorylation is essential for its function. It is depleted from the membrane upon phosphorylation. Tyrosine phosphorylation is inhibited by phosphatase PTPN4. Post-translationally, isoform 1 is myristoylated. Required for membrane association which is critical for its ability to initiate efficient signaling. Expressed in spleen, prostate, testis, uterus, small intestine, colon, peripheral blood leukocytes, heart, placenta, lung, liver, skeletal muscle, and pancreas Isoform 2 is ubiquitously expressed (at lower levels than isoform 1).

The protein localises to the cytoplasm. The protein resides in the golgi apparatus. It is found in the cell membrane. Its subcellular location is the endoplasmic reticulum. It localises to the early endosome membrane. The protein localises to the late endosome membrane. The protein resides in the cell projection. It is found in the phagocytic cup. Functionally, functions as a sorting adapter in different signaling pathways to facilitate downstream signaling leading to type I interferon induction. In TLR4 signaling, physically bridges TLR4 and TICAM1 and functionally transmits signal to TICAM1 in early endosomes after endocytosis of TLR4. In TLR2 signaling, physically bridges TLR2 and MYD88 and is required for the TLR2-dependent movement of MYD88 to endosomes following ligand engagement. Involved in IL-18 signaling and is proposed to function as a sorting adapter for MYD88 in IL-18 signaling during adaptive immune response. Forms a complex with RAB11FIP2 that is recruited to the phagosomes to promote the activation of the actin-regulatory GTPases RAC1 and CDC42 and subsequent phagocytosis of Gram-negative bacteria. Proposed to inhibit LPS-TLR4 signaling at the late endosome by interaction with isoform 1 thereby disrupting the association of isoform 1 with TICAM1. May be involved in TLR4 degradation in late endosomes. The polypeptide is TIR domain-containing adapter molecule 2 (TICAM2) (Homo sapiens (Human)).